We begin with the raw amino-acid sequence, 460 residues long: Putative protein p41 (460 aa).

Positions 14-186 (INHLLDIKRS…WGQAWFVDQG (173 aa)) constitute a Helicase ATP-binding domain.

The chain is Putative protein p41 (41) from Escherichia coli (Bacteriophage APSE-1).